A 299-amino-acid chain; its full sequence is Probable lipid kinase YegS (299 aa).

The 132-residue stretch at 2–133 folds into the DAGKc domain; the sequence is ADLPASLLIL…IDIAQVNKET (132 aa). Residues T40, 66–72, and T95 contribute to the ATP site; that span reads GDGTINE. Mg(2+) is bound by residues L215, D218, and L220. Catalysis depends on E271, which acts as the Proton acceptor.

It belongs to the diacylglycerol/lipid kinase family. YegS lipid kinase subfamily. Mg(2+) serves as cofactor. It depends on Ca(2+) as a cofactor.

The protein localises to the cytoplasm. In terms of biological role, probably phosphorylates lipids; the in vivo substrate is unknown. This Escherichia fergusonii (strain ATCC 35469 / DSM 13698 / CCUG 18766 / IAM 14443 / JCM 21226 / LMG 7866 / NBRC 102419 / NCTC 12128 / CDC 0568-73) protein is Probable lipid kinase YegS.